A 1067-amino-acid chain; its full sequence is Carbamoyl phosphate synthase large chain (1067 aa).

Residues 1–401 (MPLNKDIKKV…AFLKGIRSLE (401 aa)) are carboxyphosphate synthetic domain. ATP contacts are provided by Arg129, Arg169, Gly175, Gly176, Lys208, Val210, Glu215, Gly241, Ile242, His243, Gln284, and Glu298. The ATP-grasp 1 domain maps to 133 to 327 (RDMMNRINQP…IAKVAAKIAL (195 aa)). Residues Gln284, Glu298, and Asn300 each contribute to the Mg(2+) site. 3 residues coordinate Mn(2+): Gln284, Glu298, and Asn300. Residues 402–549 (IGKYSLEHKK…YSTYEQYDEV (148 aa)) are oligomerization domain. Residues 550-932 (VVSDNKKVVV…ALYKGFVGAS (383 aa)) form a carbamoyl phosphate synthetic domain region. The ATP-grasp 2 domain maps to 674 to 864 (DDLLERLNIA…IVDIATRIML (191 aa)). Residues Arg710, Lys749, Leu751, Glu755, Gly780, Val781, His782, Ser783, Gln823, and Glu835 each coordinate ATP. Mg(2+) is bound by residues Gln823, Glu835, and Asn837. Mn(2+)-binding residues include Gln823, Glu835, and Asn837. Residues 933-1067 (MYTGDKGKTI…NRELEVFNLI (135 aa)) form the MGS-like domain. The interval 933 to 1067 (MYTGDKGKTI…NRELEVFNLI (135 aa)) is allosteric domain.

It belongs to the CarB family. Composed of two chains; the small (or glutamine) chain promotes the hydrolysis of glutamine to ammonia, which is used by the large (or ammonia) chain to synthesize carbamoyl phosphate. Tetramer of heterodimers (alpha,beta)4. Mg(2+) is required as a cofactor. Requires Mn(2+) as cofactor.

It carries out the reaction hydrogencarbonate + L-glutamine + 2 ATP + H2O = carbamoyl phosphate + L-glutamate + 2 ADP + phosphate + 2 H(+). The enzyme catalyses hydrogencarbonate + NH4(+) + 2 ATP = carbamoyl phosphate + 2 ADP + phosphate + 2 H(+). The protein operates within amino-acid biosynthesis; L-arginine biosynthesis; carbamoyl phosphate from bicarbonate: step 1/1. It functions in the pathway pyrimidine metabolism; UMP biosynthesis via de novo pathway; (S)-dihydroorotate from bicarbonate: step 1/3. Large subunit of the glutamine-dependent carbamoyl phosphate synthetase (CPSase). CPSase catalyzes the formation of carbamoyl phosphate from the ammonia moiety of glutamine, carbonate, and phosphate donated by ATP, constituting the first step of 2 biosynthetic pathways, one leading to arginine and/or urea and the other to pyrimidine nucleotides. The large subunit (synthetase) binds the substrates ammonia (free or transferred from glutamine from the small subunit), hydrogencarbonate and ATP and carries out an ATP-coupled ligase reaction, activating hydrogencarbonate by forming carboxy phosphate which reacts with ammonia to form carbamoyl phosphate. This chain is Carbamoyl phosphate synthase large chain, found in Clostridium perfringens (strain 13 / Type A).